A 505-amino-acid chain; its full sequence is Tyrosine-protein kinase isoform SRK1 (505 aa).

Polar residues-rich tracts occupy residues methionine 1–glycine 10 and alanine 18–valine 31. Positions methionine 1–aspartate 53 are disordered. The SH3 domain maps to valine 54–serine 116. The SH2 domain occupies tryptophan 122–cysteine 214. A Protein kinase domain is found at isoleucine 240–phenylalanine 493. ATP is bound by residues leucine 246–valine 254 and lysine 268. Aspartate 359 functions as the Proton acceptor in the catalytic mechanism.

The protein belongs to the protein kinase superfamily. Tyr protein kinase family. SRC subfamily.

It localises to the cytoplasm. It catalyses the reaction L-tyrosyl-[protein] + ATP = O-phospho-L-tyrosyl-[protein] + ADP + H(+). The sequence is that of Tyrosine-protein kinase isoform SRK1 (SRK1) from Spongilla lacustris (Freshwater sponge).